Reading from the N-terminus, the 184-residue chain is ADP-ribosylation factor-like protein 2 (184 aa).

Residue glycine 2 is the site of N-myristoyl glycine attachment. Glycine 23–threonine 30 is a GTP binding site. Residue serine 45 is modified to Phosphoserine. GTP contacts are provided by residues aspartate 66–glutamine 70 and glycine 68. Residue lysine 71 forms a Glycyl lysine isopeptide (Lys-Gly) (interchain with G-Cter in ubiquitin) linkage. Asparagine 125–aspartate 128 lines the GTP pocket.

Belongs to the small GTPase superfamily. Arf family. As to quaternary structure, found in a complex with ARL2, ARL2BP and SLC25A6. Found in a complex with at least ARL2, PPP2CB, PPP2R1A, PPP2R2A, PPP2R5E and TBCD. Interacts with ELMOD2. The GTP-bound form interacts with ARL2BP. The GDP-bound form interacts preferentially with TBCD. Interacts with UNC119. Found in a complex with ARL2, ARL2BP and SLC25A4. The GTP-bound form interacts with PDE6D. In terms of processing, not N-myristoylated. Expressed in brain, retina, lung, cerebellum, liver, kidney, hippocampus, spleen, cortex and heart (at protein level).

The protein localises to the mitochondrion intermembrane space. It is found in the cytoplasm. Its subcellular location is the cytoskeleton. The protein resides in the microtubule organizing center. It localises to the centrosome. The protein localises to the nucleus. Functionally, small GTP-binding protein which cycles between an inactive GDP-bound and an active GTP-bound form, and the rate of cycling is regulated by guanine nucleotide exchange factors (GEF) and GTPase-activating proteins (GAP). GTP-binding protein that does not act as an allosteric activator of the cholera toxin catalytic subunit. Regulates formation of new microtubules and centrosome integrity. Prevents the TBCD-induced microtubule destruction. Participates in association with TBCD, in the disassembly of the apical junction complexes. Antagonizes the effect of TBCD on epithelial cell detachment and tight and adherens junctions disassembly. Together with ARL2, plays a role in the nuclear translocation, retention and transcriptional activity of STAT3. Component of a regulated secretory pathway involved in Ca(2+)-dependent release of acetylcholine. Required for normal progress through the cell cycle. In Rattus norvegicus (Rat), this protein is ADP-ribosylation factor-like protein 2 (Arl2).